We begin with the raw amino-acid sequence, 381 residues long: Succinyl-diaminopimelate desuccinylase (381 aa).

Zn(2+) is bound at residue His69. Asp71 is a catalytic residue. Asp103 provides a ligand contact to Zn(2+). Residue Glu137 is the Proton acceptor of the active site. Zn(2+) contacts are provided by Glu138, Glu166, and His355.

It belongs to the peptidase M20A family. DapE subfamily. Homodimer. Zn(2+) is required as a cofactor. The cofactor is Co(2+).

It carries out the reaction N-succinyl-(2S,6S)-2,6-diaminopimelate + H2O = (2S,6S)-2,6-diaminopimelate + succinate. Its pathway is amino-acid biosynthesis; L-lysine biosynthesis via DAP pathway; LL-2,6-diaminopimelate from (S)-tetrahydrodipicolinate (succinylase route): step 3/3. Catalyzes the hydrolysis of N-succinyl-L,L-diaminopimelic acid (SDAP), forming succinate and LL-2,6-diaminopimelate (DAP), an intermediate involved in the bacterial biosynthesis of lysine and meso-diaminopimelic acid, an essential component of bacterial cell walls. The protein is Succinyl-diaminopimelate desuccinylase of Rickettsia felis (strain ATCC VR-1525 / URRWXCal2) (Rickettsia azadi).